Here is an 893-residue protein sequence, read N- to C-terminus: ATPase family gene 2 protein homolog A (893 aa).

Residues 1 to 10 (MSSKKNRKRL) show a composition bias toward basic residues. The disordered stretch occupies residues 1–26 (MSSKKNRKRLNQSAENGSSLPSAASS). The tract at residues 1–237 (MSSKKNRKRL…SLELSLQLSQ (237 aa)) is required for interaction with AFG2B and CINP. Residues 11–25 (NQSAENGSSLPSAAS) show a composition bias toward polar residues. Thr272 carries the phosphothreonine modification. Phosphoserine is present on residues Ser274 and Ser279. ATP contacts are provided by residues 394–401 (GPPGTGKT) and 668–675 (GPPGCSKT). Lys859 is covalently cross-linked (Glycyl lysine isopeptide (Lys-Gly) (interchain with G-Cter in SUMO2)).

It belongs to the AAA ATPase family. AFG2 subfamily. As to quaternary structure, part of the 55LCC heterohexameric ATPase complex composed at least of AIRIM, AFG2A, AFG2B and CINP. Associates with pre-60S ribosomal particles.

The protein resides in the cytoplasm. The protein localises to the mitochondrion. It is found in the cytoskeleton. It localises to the spindle. The enzyme catalyses ATP + H2O = ADP + phosphate + H(+). Its activity is regulated as follows. AFG2A alone display limited ATPase activity and is not regulated by RNA or DNA binding. In the context of 55LCC heterohexameric ATPase complex, the ATPase activity increases and is stimulated by DNA binding and inhibited in presence of RNA. Its function is as follows. ATP-dependent chaperone part of the 55LCC heterohexameric ATPase complex which is chromatin-associated and promotes replisome proteostasis to maintain replication fork progression and genome stability. Required for replication fork progression, sister chromatid cohesion, and chromosome stability. The ATPase activity is specifically enhanced by replication fork DNA and is coupled to cysteine protease-dependent cleavage of replisome substrates in response to replication fork damage. Uses ATPase activity to process replisome substrates in S-phase, facilitating their proteolytic turnover from chromatin to ensure DNA replication and mitotic fidelity. Plays an essential role in the cytoplasmic maturation steps of pre-60S ribosomal particles by promoting the release of shuttling protein RSL24D1/RLP24 from the pre-ribosomal particles. May be involved in morphological and functional mitochondrial transformations during spermatogenesis. The chain is ATPase family gene 2 protein homolog A from Homo sapiens (Human).